A 174-amino-acid polypeptide reads, in one-letter code: UPF0398 protein llmg_0513 (174 aa).

This sequence belongs to the UPF0398 family.

The chain is UPF0398 protein llmg_0513 from Lactococcus lactis subsp. cremoris (strain MG1363).